The following is a 521-amino-acid chain: Apolipoprotein N-acyltransferase (521 aa).

The next 6 helical transmembrane spans lie at 27–47 (VLLA…IAFA), 64–84 (LGFV…TIVV), 93–113 (IVSV…PAVV), 125–145 (ISLL…RAFL), 167–187 (IADI…NVVL), and 202–222 (YPVK…AYGF). The CN hydrolase domain occupies 239-483 (IQGNIDQNIK…EAVLNGEVRL (245 aa)). Catalysis depends on Glu-281, which acts as the Proton acceptor. Lys-344 is a catalytic residue. The active-site Nucleophile is Cys-394. The chain crosses the membrane as a helical span at residues 493–513 (YGDVFAWACVAGAAVVAALAF).

Belongs to the CN hydrolase family. Apolipoprotein N-acyltransferase subfamily.

The protein resides in the cell inner membrane. It carries out the reaction N-terminal S-1,2-diacyl-sn-glyceryl-L-cysteinyl-[lipoprotein] + a glycerophospholipid = N-acyl-S-1,2-diacyl-sn-glyceryl-L-cysteinyl-[lipoprotein] + a 2-acyl-sn-glycero-3-phospholipid + H(+). It functions in the pathway protein modification; lipoprotein biosynthesis (N-acyl transfer). Its function is as follows. Catalyzes the phospholipid dependent N-acylation of the N-terminal cysteine of apolipoprotein, the last step in lipoprotein maturation. The sequence is that of Apolipoprotein N-acyltransferase from Geobacter metallireducens (strain ATCC 53774 / DSM 7210 / GS-15).